The chain runs to 1253 residues: Guanine nucleotide exchange factor SDC25 (1253 aa).

One can recognise an SH3 domain in the interval 26-98; the sequence is QPIDVVECTY…PPSFTRSILN (73 aa). The tract at residues 624-649 is disordered; it reads LNLDNAKDKKNGSQNTDIQEEEDEYE. The region spanning 782 to 914 is the N-terminal Ras-GEF domain; sequence GPIVRIKGGS…ELLKEVNQKF (133 aa). The Ras-GEF domain occupies 952–1199; the sequence is VDPVLFATQL…QYQLSLIIEP (248 aa). A disordered region spans residues 1202-1253; it reads RKKVVPNSNSNNKSQEKSRDDQTDEGKTSTKKDRFPKFQLHKTKKKAPKVSK. Over residues 1215–1237 the composition is skewed to basic and acidic residues; the sequence is SQEKSRDDQTDEGKTSTKKDRFP. A compositionally biased stretch (basic residues) spans 1240–1253; the sequence is QLHKTKKKAPKVSK.

Its function is as follows. Promotes the exchange of Ras-bound GDP by GTP. This chain is Guanine nucleotide exchange factor SDC25 (SDC25), found in Saccharomyces cerevisiae (Baker's yeast).